Consider the following 200-residue polypeptide: Protein OPI10 homolog (200 aa).

The protein belongs to the OPI10 family.

It localises to the cytoplasm. The protein localises to the nucleus envelope. The polypeptide is Protein OPI10 homolog (Schizosaccharomyces pombe (strain 972 / ATCC 24843) (Fission yeast)).